A 366-amino-acid polypeptide reads, in one-letter code: Holliday junction branch migration complex subunit RuvB (366 aa).

The segment at 3 to 183 (ADGLVSAAAS…FGFTAHLDFY (181 aa)) is large ATPase domain (RuvB-L). ATP contacts are provided by residues L22, R23, G64, K67, T68, S69, 130–132 (EDF), R173, Y183, and R220. Residue T68 participates in Mg(2+) binding. Residues 184–254 (APDELARVLT…VARAALRIYD (71 aa)) form a small ATPAse domain (RuvB-S) region. The head domain (RuvB-H) stretch occupies residues 257–366 (GLGLDRLDRA…PEDGLHPGGG (110 aa)). Positions 312 and 317 each coordinate DNA.

The protein belongs to the RuvB family. As to quaternary structure, homohexamer. Forms an RuvA(8)-RuvB(12)-Holliday junction (HJ) complex. HJ DNA is sandwiched between 2 RuvA tetramers; dsDNA enters through RuvA and exits via RuvB. An RuvB hexamer assembles on each DNA strand where it exits the tetramer. Each RuvB hexamer is contacted by two RuvA subunits (via domain III) on 2 adjacent RuvB subunits; this complex drives branch migration. In the full resolvosome a probable DNA-RuvA(4)-RuvB(12)-RuvC(2) complex forms which resolves the HJ.

The protein localises to the cytoplasm. The catalysed reaction is ATP + H2O = ADP + phosphate + H(+). In terms of biological role, the RuvA-RuvB-RuvC complex processes Holliday junction (HJ) DNA during genetic recombination and DNA repair, while the RuvA-RuvB complex plays an important role in the rescue of blocked DNA replication forks via replication fork reversal (RFR). RuvA specifically binds to HJ cruciform DNA, conferring on it an open structure. The RuvB hexamer acts as an ATP-dependent pump, pulling dsDNA into and through the RuvAB complex. RuvB forms 2 homohexamers on either side of HJ DNA bound by 1 or 2 RuvA tetramers; 4 subunits per hexamer contact DNA at a time. Coordinated motions by a converter formed by DNA-disengaged RuvB subunits stimulates ATP hydrolysis and nucleotide exchange. Immobilization of the converter enables RuvB to convert the ATP-contained energy into a lever motion, pulling 2 nucleotides of DNA out of the RuvA tetramer per ATP hydrolyzed, thus driving DNA branch migration. The RuvB motors rotate together with the DNA substrate, which together with the progressing nucleotide cycle form the mechanistic basis for DNA recombination by continuous HJ branch migration. Branch migration allows RuvC to scan DNA until it finds its consensus sequence, where it cleaves and resolves cruciform DNA. The protein is Holliday junction branch migration complex subunit RuvB of Frankia alni (strain DSM 45986 / CECT 9034 / ACN14a).